Reading from the N-terminus, the 198-residue chain is MKSIEELYKRALELKNKGMSDKEISTELHLSVNTVTWLLSKEFLKEGAVQDVKIGWRSVGVFGSRIISIAEIMSDIIREEMNKNSFEVDSILGIAINGIPYATLVSYLMDKELIVYRPHPARKEGVFSSNFASVEGKRVVIIDDVASTGETMRRTITDVTKEGGKPVLCVLLASKMSVNDLNGVPVRSLIRTQVIGGS.

Belongs to the purine/pyrimidine phosphoribosyltransferase family. GfcR subfamily.

The sequence is that of Transcriptional regulator GfcR from Thermoplasma acidophilum (strain ATCC 25905 / DSM 1728 / JCM 9062 / NBRC 15155 / AMRC-C165).